The primary structure comprises 453 residues: Bifunctional protein GlmU (453 aa).

A pyrophosphorylase region spans residues 1 to 227 (MAVSVIILAA…SIEVMGVNDR (227 aa)). Residues 8–11 (LAAG), Lys22, Gln73, 78–79 (GT), 100–102 (SGD), Gly137, Glu152, Asn167, and Asn225 contribute to the UDP-N-acetyl-alpha-D-glucosamine site. Asp102 is a binding site for Mg(2+). Asn225 is a Mg(2+) binding site. The linker stretch occupies residues 228–248 (QQLAYLERFYQKREAARLMGE). The tract at residues 249–453 (GVSLSDPDRF…WPGWKRPSKK (205 aa)) is N-acetyltransferase. UDP-N-acetyl-alpha-D-glucosamine contacts are provided by Arg331 and Lys349. His361 acts as the Proton acceptor in catalysis. Residues Tyr364 and Asn375 each coordinate UDP-N-acetyl-alpha-D-glucosamine. Residues Ala378, 384-385 (NY), Ser403, Ala421, and Arg438 contribute to the acetyl-CoA site. Positions 430-453 (PPGELTLSRTPQKSWPGWKRPSKK) are disordered.

This sequence in the N-terminal section; belongs to the N-acetylglucosamine-1-phosphate uridyltransferase family. It in the C-terminal section; belongs to the transferase hexapeptide repeat family. In terms of assembly, homotrimer. It depends on Mg(2+) as a cofactor.

It localises to the cytoplasm. The catalysed reaction is alpha-D-glucosamine 1-phosphate + acetyl-CoA = N-acetyl-alpha-D-glucosamine 1-phosphate + CoA + H(+). It carries out the reaction N-acetyl-alpha-D-glucosamine 1-phosphate + UTP + H(+) = UDP-N-acetyl-alpha-D-glucosamine + diphosphate. The protein operates within nucleotide-sugar biosynthesis; UDP-N-acetyl-alpha-D-glucosamine biosynthesis; N-acetyl-alpha-D-glucosamine 1-phosphate from alpha-D-glucosamine 6-phosphate (route II): step 2/2. It functions in the pathway nucleotide-sugar biosynthesis; UDP-N-acetyl-alpha-D-glucosamine biosynthesis; UDP-N-acetyl-alpha-D-glucosamine from N-acetyl-alpha-D-glucosamine 1-phosphate: step 1/1. Its pathway is bacterial outer membrane biogenesis; LPS lipid A biosynthesis. Catalyzes the last two sequential reactions in the de novo biosynthetic pathway for UDP-N-acetylglucosamine (UDP-GlcNAc). The C-terminal domain catalyzes the transfer of acetyl group from acetyl coenzyme A to glucosamine-1-phosphate (GlcN-1-P) to produce N-acetylglucosamine-1-phosphate (GlcNAc-1-P), which is converted into UDP-GlcNAc by the transfer of uridine 5-monophosphate (from uridine 5-triphosphate), a reaction catalyzed by the N-terminal domain. This chain is Bifunctional protein GlmU, found in Nitrosococcus oceani (strain ATCC 19707 / BCRC 17464 / JCM 30415 / NCIMB 11848 / C-107).